The following is a 152-amino-acid chain: Proline-rich acidic protein 1 (152 aa).

Residues 1-20 form the signal peptide; sequence MKRFLLATCLVAVLLWEAGA.

In terms of assembly, interacts with MTTP. Interacts with MAD1L1. In terms of tissue distribution, highly expressed in the small intestine where it shows a proximal-distal graded expression.

The protein localises to the secreted. The protein resides in the endoplasmic reticulum. Functionally, lipid-binding protein which promotes lipid absorption by facilitating MTTP-mediated lipid transfer (mainly triglycerides and phospholipids) and MTTP-mediated apoB lipoprotein assembly and secretion. Protects the gastrointestinal epithelium from irradiation-induced apoptosis. May play an important role in maintaining normal growth homeostasis in epithelial cells. Involved in p53/TP53-dependent cell survival after DNA damage. The chain is Proline-rich acidic protein 1 (Prap1) from Rattus norvegicus (Rat).